The sequence spans 151 residues: Snaclec 3 (151 aa).

A signal peptide spans 1–23; sequence MGRLVFVSFSLLVVFLSLSGTAA. Disulfide bonds link Cys25–Cys36, Cys53–Cys149, and Cys125–Cys141. The C-type lectin domain maps to 32–150; it reads YEGHCYKPFN…CGEINPFVCK (119 aa).

It belongs to the snaclec family. As to quaternary structure, heterodimer; disulfide-linked. Expressed by the venom gland.

The protein resides in the secreted. In terms of biological role, interferes with one step of hemostasis (modulation of platelet aggregation, or coagulation cascade, for example). In Sistrurus catenatus edwardsii (Desert massasauga), this protein is Snaclec 3.